A 173-amino-acid polypeptide reads, in one-letter code: Bifunctional protein PyrR (173 aa).

A PRPP-binding motif is present at residues 93-105 (VILIDDVLYTGRT).

This sequence belongs to the purine/pyrimidine phosphoribosyltransferase family. PyrR subfamily. Homodimer and homohexamer; in equilibrium.

The catalysed reaction is UMP + diphosphate = 5-phospho-alpha-D-ribose 1-diphosphate + uracil. Functionally, regulates transcriptional attenuation of the pyrimidine nucleotide (pyr) operon by binding in a uridine-dependent manner to specific sites on pyr mRNA. This disrupts an antiterminator hairpin in the RNA and favors formation of a downstream transcription terminator, leading to a reduced expression of downstream genes. Also displays a weak uracil phosphoribosyltransferase activity which is not physiologically significant. The protein is Bifunctional protein PyrR of Streptococcus pyogenes serotype M49 (strain NZ131).